A 214-amino-acid polypeptide reads, in one-letter code: Phosphatidylcholine transfer protein (214 aa).

The residue at position 1 (Met-1) is an N-acetylmethionine. The START domain occupies 1-212 (MELAAGSFSE…MARACQNYLK (212 aa)). A 1,2-diacyl-sn-glycero-3-phosphocholine contacts are provided by Tyr-72 and Arg-78. Ser-139 is modified (phosphoserine). Gln-157 provides a ligand contact to a 1,2-diacyl-sn-glycero-3-phosphocholine.

Interacts with ACOT13/THEM2. Highest expression in liver, placenta, testis, kidney and heart. Low levels in brain and lung. No expression detected in thymus.

It localises to the cytoplasm. Catalyzes the transfer of phosphatidylcholine between membranes. Binds a single lipid molecule. This is Phosphatidylcholine transfer protein (PCTP) from Homo sapiens (Human).